The chain runs to 310 residues: Acetyl-coenzyme A carboxylase carboxyl transferase subunit alpha (310 aa).

The region spanning 36–286 is the CoA carboxyltransferase C-terminal domain; the sequence is NLEKEITKTY…GEYILKQLDE (251 aa).

It belongs to the AccA family. Acetyl-CoA carboxylase is a heterohexamer composed of biotin carboxyl carrier protein (AccB), biotin carboxylase (AccC) and two subunits each of ACCase subunit alpha (AccA) and ACCase subunit beta (AccD).

The protein localises to the cytoplasm. It catalyses the reaction N(6)-carboxybiotinyl-L-lysyl-[protein] + acetyl-CoA = N(6)-biotinyl-L-lysyl-[protein] + malonyl-CoA. It participates in lipid metabolism; malonyl-CoA biosynthesis; malonyl-CoA from acetyl-CoA: step 1/1. Its function is as follows. Component of the acetyl coenzyme A carboxylase (ACC) complex. First, biotin carboxylase catalyzes the carboxylation of biotin on its carrier protein (BCCP) and then the CO(2) group is transferred by the carboxyltransferase to acetyl-CoA to form malonyl-CoA. The protein is Acetyl-coenzyme A carboxylase carboxyl transferase subunit alpha of Campylobacter fetus subsp. fetus (strain 82-40).